The following is a 209-amino-acid chain: Uracil phosphoribosyltransferase (209 aa).

5-phospho-alpha-D-ribose 1-diphosphate-binding positions include R79, R104, and 131-139 (DPMLATGGS). Residues I194 and 199 to 201 (GDA) contribute to the uracil site. D200 serves as a coordination point for 5-phospho-alpha-D-ribose 1-diphosphate.

The protein belongs to the UPRTase family. The cofactor is Mg(2+).

The catalysed reaction is UMP + diphosphate = 5-phospho-alpha-D-ribose 1-diphosphate + uracil. The protein operates within pyrimidine metabolism; UMP biosynthesis via salvage pathway; UMP from uracil: step 1/1. With respect to regulation, allosterically activated by GTP. Catalyzes the conversion of uracil and 5-phospho-alpha-D-ribose 1-diphosphate (PRPP) to UMP and diphosphate. The polypeptide is Uracil phosphoribosyltransferase (Chromohalobacter salexigens (strain ATCC BAA-138 / DSM 3043 / CIP 106854 / NCIMB 13768 / 1H11)).